The sequence spans 251 residues: NADPH-dependent oxidoreductase (251 aa).

Belongs to the flavin oxidoreductase frp family. FMN serves as cofactor.

Reduces FMN, organic nitro compounds and disulfide DTNB. Involved in maintenance of the cellular redox state and the disulfide stress response. In Staphylococcus epidermidis (strain ATCC 35984 / DSM 28319 / BCRC 17069 / CCUG 31568 / BM 3577 / RP62A), this protein is NADPH-dependent oxidoreductase (nfrA).